A 422-amino-acid polypeptide reads, in one-letter code: G-protein coupled receptor 83 (422 aa).

An N-terminal signal peptide occupies residues 1–17 (MNVPPVLLLFLLSSVRA). Topologically, residues 18–70 (TEQPQVVTEHPSMDAALTGANASHFWANYTFSDWQNFVGRRRYGAESQNPTVK) are extracellular. The helical transmembrane segment at 71 to 91 (ALLIVAYSFIIVFSLFGNVLV) threads the bilayer. Topologically, residues 92–106 (CHVIFKNQRMHSATS) are cytoplasmic. Residues 107-127 (LFIVNLAVADIMITLLNTPFT) form a helical membrane-spanning segment. At 128–143 (LVRFVNSTWVFGKGMC) the chain is on the extracellular side. Cysteines 143 and 223 form a disulfide. The helical transmembrane segment at 144–166 (HVSRFAQYCSLHVSALTLTAIAV) threads the bilayer. The Cytoplasmic segment spans residues 167–184 (DRHQVIMHPLKPRISITK). A helical transmembrane segment spans residues 185 to 205 (GVIYIAVIWVMATFFSLPHAI). Over 206 to 236 (CQKLFTFKYSEDIVRSLCLPDFPEPADLFWK) the chain is Extracellular. A helical membrane pass occupies residues 237 to 257 (YLDLATFILLYLLPLFIISVA). Over 258-292 (YARVAKKLWLCNTIGDVTTEQYLALRRKKKTTVKM) the chain is Cytoplasmic. Residues 293 to 313 (LVLVVVLFALCWFPLNCYVLL) traverse the membrane as a helical segment. Topologically, residues 314-326 (LSSKAIHTNNALY) are extracellular. The chain crosses the membrane as a helical span at residues 327–347 (FAFHWFAMSSTCYNPFIYCWL). The Cytoplasmic segment spans residues 348-422 (NENFRVELKA…SSVEPTVAVS (75 aa)). The segment at 401-422 (PSSQIQSGKTDLSSVEPTVAVS) is disordered.

It belongs to the G-protein coupled receptor 1 family. Expressed preferentially in brain, and its neuronal expression is relegated to limbic brain regions, particularly in forebrain.

It localises to the cell membrane. G-protein coupled receptor for PEN, a neuropeptide produced from the precursor protein, proSAAS (encoded by PCSK1N). Acts through a G(i)- and G(q)-alpha-alpha-mediated pathway in response to PEN. Plays a role in food intake and body weight regulation. May contribute to the regulation of anxiety-related behaviors. In Rattus norvegicus (Rat), this protein is G-protein coupled receptor 83.